Reading from the N-terminus, the 328-residue chain is Global transcription regulator sge1 (328 aa).

Disordered stretches follow at residues 94-120 (PGEK…PRQR) and 251-293 (QMHQ…QYVH). Low complexity-rich tracts occupy residues 106–116 (KSTTQSGGISK), 251–261 (QMHQPQVHQPL), and 282–293 (AHQPQVHQQYVH).

Belongs to the MIT1/WOR1 family.

The protein resides in the nucleus. In terms of biological role, global transcriptional regulator of transcription that impacts, but is not absolutely required for secondary metabolism and pathogenicity on maize. Regulates synthesis of multiple secondary metabolites, including fumonisins and fusarins. In Gibberella moniliformis (strain M3125 / FGSC 7600) (Maize ear and stalk rot fungus), this protein is Global transcription regulator sge1.